Consider the following 224-residue polypeptide: LexA repressor (224 aa).

Positions 31–51 (RAEIAAELGFKSANAAEEHLQ) form a DNA-binding region, H-T-H motif. Active-site for autocatalytic cleavage activity residues include Ser142 and Lys179.

This sequence belongs to the peptidase S24 family. In terms of assembly, homodimer.

It catalyses the reaction Hydrolysis of Ala-|-Gly bond in repressor LexA.. In terms of biological role, represses a number of genes involved in the response to DNA damage (SOS response), including recA and lexA. In the presence of single-stranded DNA, RecA interacts with LexA causing an autocatalytic cleavage which disrupts the DNA-binding part of LexA, leading to derepression of the SOS regulon and eventually DNA repair. This Verminephrobacter eiseniae (strain EF01-2) protein is LexA repressor.